The sequence spans 325 residues: Phospholipid phosphatase-related protein type 1 (325 aa).

3 helical membrane-spanning segments follow: residues 11-31 (YSIIPCFIFVELVIMAGTVLL), 67-87 (FISPLVLYCVLAATPTAIIFI), and 127-147 (FIGVFAFGLFATDIFVNAGQV). The N-linked (GlcNAc...) asparagine glycan is linked to Asn-163. Transmembrane regions (helical) follow at residues 201–218 (AALSIYSALYATMYITST), 230–247 (VLCLGTLCCAFLTGLNRV), and 257–277 (VIGGFILGTAIALFLGLCVVH). Asn-316 carries N-linked (GlcNAc...) asparagine glycosylation.

The protein belongs to the PA-phosphatase related phosphoesterase family.

Its subcellular location is the cell membrane. The protein resides in the cell projection. It is found in the neuron projection. Its function is as follows. May play a role in neurite outgrowth and neurogenesis. The chain is Phospholipid phosphatase-related protein type 1 from Xenopus tropicalis (Western clawed frog).